Consider the following 164-residue polypeptide: Nucleotide-binding protein Emin_0136 (164 aa).

It belongs to the YajQ family.

Nucleotide-binding protein. The sequence is that of Nucleotide-binding protein Emin_0136 from Elusimicrobium minutum (strain Pei191).